Here is a 317-residue protein sequence, read N- to C-terminus: Putative 2-hydroxyacid dehydrogenase SERP1888 (317 aa).

NAD(+) is bound by residues 155 to 156 (EI), 234 to 236 (AGR), and D260. The active site involves R236. The active site involves E265. Catalysis depends on H283, which acts as the Proton donor. 283–286 (HIGN) serves as a coordination point for NAD(+).

Belongs to the D-isomer specific 2-hydroxyacid dehydrogenase family.

The sequence is that of Putative 2-hydroxyacid dehydrogenase SERP1888 from Staphylococcus epidermidis (strain ATCC 35984 / DSM 28319 / BCRC 17069 / CCUG 31568 / BM 3577 / RP62A).